We begin with the raw amino-acid sequence, 204 residues long: Elongation factor Ts (204 aa).

An involved in Mg(2+) ion dislocation from EF-Tu region spans residues 87–90 (TDFV).

The protein belongs to the EF-Ts family.

The protein localises to the cytoplasm. Its function is as follows. Associates with the EF-Tu.GDP complex and induces the exchange of GDP to GTP. It remains bound to the aminoacyl-tRNA.EF-Tu.GTP complex up to the GTP hydrolysis stage on the ribosome. This chain is Elongation factor Ts, found in Frankia alni (strain DSM 45986 / CECT 9034 / ACN14a).